We begin with the raw amino-acid sequence, 368 residues long: Seven-bladed beta-propeller protein MSMEG_5308 (368 aa).

In terms of assembly, interacts with MmpL3 and TtfA.

It localises to the cell septum. The protein localises to the cell tip. In terms of biological role, stabilizes the MmpL3/TtfA trehalose monomycolate (TMM) transport complex under stress conditions. The protein is Seven-bladed beta-propeller protein MSMEG_5308 of Mycolicibacterium smegmatis (strain ATCC 700084 / mc(2)155) (Mycobacterium smegmatis).